Reading from the N-terminus, the 169-residue chain is Aspartic protease inhibitor 6 (169 aa).

An N-linked (GlcNAc...) asparagine glycan is attached at N1. Cystine bridges form between C30–C75 and C124–C134.

Belongs to the protease inhibitor I3 (leguminous Kunitz-type inhibitor) family.

Its subcellular location is the vacuole. Inhibitor of cathepsin D (aspartic protease). May also inhibit trypsin and chymotrypsin (serine proteases). Protects the plant by inhibiting proteases of invading organisms. The chain is Aspartic protease inhibitor 6 from Solanum tuberosum (Potato).